The chain runs to 157 residues: Transcriptional repressor NrdR (157 aa).

The segment at 3–34 (CSNCQNKNTKVLDSRPIEEGRAIRRRRECERC) is a zinc-finger region. Residues 49 to 139 (LIVVKKDGVR…VYRQFKDITV (91 aa)) enclose the ATP-cone domain.

The protein belongs to the NrdR family. Zn(2+) serves as cofactor.

In terms of biological role, negatively regulates transcription of bacterial ribonucleotide reductase nrd genes and operons by binding to NrdR-boxes. The chain is Transcriptional repressor NrdR from Oceanobacillus iheyensis (strain DSM 14371 / CIP 107618 / JCM 11309 / KCTC 3954 / HTE831).